A 54-amino-acid polypeptide reads, in one-letter code: U-reduvitoxin-Pr1a (54 aa).

The first 19 residues, 1–19, serve as a signal peptide directing secretion; that stretch reads MKLLGLLLLVFTFMALAFA. 3 disulfides stabilise this stretch: C24–C39, C31–C44, and C38–C51.

Belongs to the venom Ptu1-like knottin family. In terms of tissue distribution, expressed by the venom gland (posterior main gland) (at protein level).

It is found in the secreted. Binds reversibly and blocks P/Q-type voltage-gated calcium channels (Cav). This Platymeris rhadamanthus (Red spot assassin bug) protein is U-reduvitoxin-Pr1a.